A 406-amino-acid chain; its full sequence is Tryptophan 2,3-dioxygenase A (406 aa).

Substrate contacts are provided by residues 71–75 (FIVTH) and R143. A heme-binding site is contributed by H327. A substrate-binding site is contributed by T341.

Belongs to the tryptophan 2,3-dioxygenase family. Homotetramer. Dimer of dimers. Heme serves as cofactor.

The catalysed reaction is L-tryptophan + O2 = N-formyl-L-kynurenine. It participates in amino-acid degradation; L-tryptophan degradation via kynurenine pathway; L-kynurenine from L-tryptophan: step 1/2. In terms of biological role, heme-dependent dioxygenase that catalyzes the oxidative cleavage of the L-tryptophan (L-Trp) pyrrole ring and converts L-tryptophan to N-formyl-L-kynurenine. Catalyzes the oxidative cleavage of the indole moiety. In Danio rerio (Zebrafish), this protein is Tryptophan 2,3-dioxygenase A.